Reading from the N-terminus, the 380-residue chain is Erythronate-4-phosphate dehydrogenase (380 aa).

Substrate is bound by residues serine 45 and threonine 66. NAD(+) is bound by residues 126–127 (QV), aspartate 146, threonine 174, 205–207 (ASR), and aspartate 231. Arginine 207 is an active-site residue. Glutamate 236 is a catalytic residue. Histidine 253 acts as the Proton donor in catalysis. An NAD(+)-binding site is contributed by glycine 256. Tyrosine 257 is a substrate binding site.

This sequence belongs to the D-isomer specific 2-hydroxyacid dehydrogenase family. PdxB subfamily. Homodimer.

The protein resides in the cytoplasm. It catalyses the reaction 4-phospho-D-erythronate + NAD(+) = (R)-3-hydroxy-2-oxo-4-phosphooxybutanoate + NADH + H(+). It functions in the pathway cofactor biosynthesis; pyridoxine 5'-phosphate biosynthesis; pyridoxine 5'-phosphate from D-erythrose 4-phosphate: step 2/5. Catalyzes the oxidation of erythronate-4-phosphate to 3-hydroxy-2-oxo-4-phosphonooxybutanoate. This is Erythronate-4-phosphate dehydrogenase from Pseudomonas savastanoi pv. phaseolicola (strain 1448A / Race 6) (Pseudomonas syringae pv. phaseolicola (strain 1448A / Race 6)).